Here is a 335-residue protein sequence, read N- to C-terminus: Geranylgeranyl pyrophosphate synthase BTS1 (335 aa).

3 residues coordinate isopentenyl diphosphate: K36, R39, and H68. Mg(2+)-binding residues include D75 and D79. R84 is a dimethylallyl diphosphate binding site. R85 is an isopentenyl diphosphate binding site. Dimethylallyl diphosphate-binding residues include K169, T170, Q206, N213, K223, and K233.

This sequence belongs to the FPP/GGPP synthase family. The cofactor is Mg(2+).

The protein resides in the cytoplasm. It carries out the reaction isopentenyl diphosphate + dimethylallyl diphosphate = (2E)-geranyl diphosphate + diphosphate. The enzyme catalyses isopentenyl diphosphate + (2E)-geranyl diphosphate = (2E,6E)-farnesyl diphosphate + diphosphate. It catalyses the reaction isopentenyl diphosphate + (2E,6E)-farnesyl diphosphate = (2E,6E,10E)-geranylgeranyl diphosphate + diphosphate. It participates in isoprenoid biosynthesis; farnesyl diphosphate biosynthesis; farnesyl diphosphate from geranyl diphosphate and isopentenyl diphosphate: step 1/1. It functions in the pathway isoprenoid biosynthesis; geranyl diphosphate biosynthesis; geranyl diphosphate from dimethylallyl diphosphate and isopentenyl diphosphate: step 1/1. Its pathway is isoprenoid biosynthesis; geranylgeranyl diphosphate biosynthesis; geranylgeranyl diphosphate from farnesyl diphosphate and isopentenyl diphosphate: step 1/1. Catalyzes the trans-addition of the 3 molecules of IPP onto DMAPP to form geranylgeranyl pyrophosphate. Required for the membrane attachment of YPT1 and SEC4. May be involved in vesicle trafficking and protein sorting. The polypeptide is Geranylgeranyl pyrophosphate synthase BTS1 (BTS1) (Saccharomyces cerevisiae (strain ATCC 204508 / S288c) (Baker's yeast)).